Consider the following 747-residue polypeptide: Potassium transporter 20 (747 aa).

The Cytoplasmic segment spans residues 1-47 (MSVQEDDDAAGPEVDRLRRHDSFYGDAEKVSNDKSHGTGENWARTLQ). Residues 48–68 (LAFQSIGVVYGDVGTSPLYVY) form a helical membrane-spanning segment. The Extracellular portion of the chain corresponds to 69-84 (SSTFPDGVKHPDDLVG). The helical transmembrane segment at 85–105 (VLSLMLYTLILIPMVKYVFIV) threads the bilayer. The Cytoplasmic portion of the chain corresponds to 106 to 171 (LYANDNGDGG…QKLESSNAAK (66 aa)). The chain crosses the membrane as a helical span at residues 172–192 (IALFTITILGTSMVMGDGTLT). The Extracellular portion of the chain corresponds to 193–209 (PAISVLSAVSGIREKAP). Residues 210 to 230 (SLTQLQVVWISVPILIVLFSV) form a helical membrane-spanning segment. Residues 231-237 (QRFGTDK) lie on the Cytoplasmic side of the membrane. Residues 238 to 258 (VGYSFAPVISVWFVLIAGIGA) form a helical membrane-spanning segment. Residues 259-288 (YNLAVHEITILRAFNPMYIIDYFRRNGKEA) are Extracellular-facing. The helical transmembrane segment at 289 to 309 (WVSLGGAVLCITGTEAMFADL) threads the bilayer. Topologically, residues 310-318 (GHFNIRAIQ) are cytoplasmic. A helical transmembrane segment spans residues 319 to 339 (LSFTCVLFPSVALCYMGQAAY). Residues 340–353 (LRKFPEDVGDTFYK) are Extracellular-facing. Residues 354-374 (SLPAPLFWPVFVVAIMAAIIA) form a helical membrane-spanning segment. Residues 375–410 (SQAMLSGAFAILSKALPLGCFPRVEVVHTSNKYEGQ) lie on the Cytoplasmic side of the membrane. A helical membrane pass occupies residues 411 to 431 (VYIPEVNFLIGVASVAITVAF). Over 432 to 442 (QTTANIGNAYG) the chain is Extracellular. Residues 443–463 (ICVVMVFSITTHLMTVVMLLI) traverse the membrane as a helical segment. The Cytoplasmic portion of the chain corresponds to 464 to 469 (WKVRLP). Residues 470–490 (FIAAFYVVFTFTEFLYLSSIL) form a helical membrane-spanning segment. Residues 491–496 (SKFAEG) are Extracellular-facing. The chain crosses the membrane as a helical span at residues 497-517 (GYLPFCFSLVLMALMATWHYV). Topologically, residues 518 to 747 (HVKRYWYELD…LLKVGITYEI (230 aa)) are cytoplasmic.

This sequence belongs to the HAK/KUP transporter (TC 2.A.72.3) family.

The protein localises to the membrane. Its function is as follows. High-affinity potassium transporter. The polypeptide is Potassium transporter 20 (HAK20) (Oryza sativa subsp. japonica (Rice)).